A 126-amino-acid chain; its full sequence is MYAENYKRLEQLIDKLREFNGVILVEGMRDEVALRKLGVETEIIKLSRFPLAEIALTASHYHDIMILTDFDRKGEDLAKKLTQYLEGYKCRVDTNTRRELKKIAKKDIKGIEDLYGLYLRFKSLRF.

The 81-residue stretch at 20-100 (NGVILVEGMR…RVDTNTRREL (81 aa)) folds into the Toprim domain. The Mg(2+) site is built by Glu-26, Asp-69, and Asp-71.

The protein belongs to the UPF0292 family. Requires Mg(2+) as cofactor.

The protein is UPF0292 protein TSIB_0423 of Thermococcus sibiricus (strain DSM 12597 / MM 739).